The chain runs to 117 residues: Iron-sulfur cluster insertion protein ErpA (117 aa).

Iron-sulfur cluster contacts are provided by cysteine 45, cysteine 109, and cysteine 111.

This sequence belongs to the HesB/IscA family. As to quaternary structure, homodimer. Iron-sulfur cluster serves as cofactor.

Required for insertion of 4Fe-4S clusters for at least IspG. The sequence is that of Iron-sulfur cluster insertion protein ErpA from Saccharophagus degradans (strain 2-40 / ATCC 43961 / DSM 17024).